The sequence spans 102 residues: Small ribosomal subunit protein eS24 (102 aa).

The protein belongs to the eukaryotic ribosomal protein eS24 family.

The chain is Small ribosomal subunit protein eS24 from Methanococcoides burtonii (strain DSM 6242 / NBRC 107633 / OCM 468 / ACE-M).